A 143-amino-acid polypeptide reads, in one-letter code: Transcriptional regulator MraZ (143 aa).

SpoVT-AbrB domains follow at residues 5–47 (TYTP…PKEE) and 76–119 (TDEQ…DKQA).

It belongs to the MraZ family. Forms oligomers.

It is found in the cytoplasm. It localises to the nucleoid. The polypeptide is Transcriptional regulator MraZ (Nocardia farcinica (strain IFM 10152)).